Consider the following 152-residue polypeptide: Methylglyoxal synthase (152 aa).

The MGS-like domain maps to 6 to 152 (RTIPAQKHIA…YQRYLQDRLK (147 aa)). Substrate is bound by residues His19, Lys23, 45-48 (TGTT), and 65-66 (SG). Asp71 functions as the Proton donor/acceptor in the catalytic mechanism. His98 contributes to the substrate binding site.

This sequence belongs to the methylglyoxal synthase family.

It catalyses the reaction dihydroxyacetone phosphate = methylglyoxal + phosphate. Functionally, catalyzes the formation of methylglyoxal from dihydroxyacetone phosphate. The polypeptide is Methylglyoxal synthase (Pectobacterium atrosepticum (strain SCRI 1043 / ATCC BAA-672) (Erwinia carotovora subsp. atroseptica)).